The primary structure comprises 869 residues: Bifunctional uridylyltransferase/uridylyl-removing enzyme (869 aa).

Positions 1–332 (MTDAPAERPD…QFDGEATPES (332 aa)) are uridylyltransferase. The uridylyl-removing stretch occupies residues 333–691 (LGGGFSLRRG…RRAVPDNDAL (359 aa)). An HD domain is found at 450–572 (VDQHTLMVLR…VGTRERLDYL (123 aa)). ACT domains follow at residues 692-774 (EVFV…RAVP) and 798-869 (RISL…LDPV).

It belongs to the GlnD family. Mg(2+) is required as a cofactor.

It carries out the reaction [protein-PII]-L-tyrosine + UTP = [protein-PII]-uridylyl-L-tyrosine + diphosphate. The enzyme catalyses [protein-PII]-uridylyl-L-tyrosine + H2O = [protein-PII]-L-tyrosine + UMP + H(+). With respect to regulation, uridylyltransferase (UTase) activity is inhibited by glutamine, while glutamine activates uridylyl-removing (UR) activity. In terms of biological role, modifies, by uridylylation and deuridylylation, the PII regulatory proteins (GlnB and homologs), in response to the nitrogen status of the cell that GlnD senses through the glutamine level. Under low glutamine levels, catalyzes the conversion of the PII proteins and UTP to PII-UMP and PPi, while under higher glutamine levels, GlnD hydrolyzes PII-UMP to PII and UMP (deuridylylation). Thus, controls uridylylation state and activity of the PII proteins, and plays an important role in the regulation of nitrogen assimilation and metabolism. The polypeptide is Bifunctional uridylyltransferase/uridylyl-removing enzyme (Xanthomonas oryzae pv. oryzae (strain MAFF 311018)).